The sequence spans 71 residues: uncharacterized protein (71 aa).

It is found in the plastid. The protein localises to the chloroplast. This is an uncharacterized protein from Mesostigma viride (Green alga).